A 281-amino-acid chain; its full sequence is 32 kDa heat shock protein (281 aa).

Over residues 142 to 168 (EDDEEIDSDEEFGDSDQDEEDSDDEEI) the composition is skewed to acidic residues. The interval 142 to 281 (EDDEEIDSDE…NENNKKKQKN (140 aa)) is disordered. The segment covering 180–209 (KITEISEVPESKKEKTPEPKKVPEPKKEQV) has biased composition (basic and acidic residues). A compositionally biased stretch (low complexity) spans 210 to 273 (KQPTQPQQKK…NNKRPQNQNE (64 aa)).

This Dictyostelium discoideum (Social amoeba) protein is 32 kDa heat shock protein (hspC).